A 573-amino-acid chain; its full sequence is 60 kDa heat shock protein, mitochondrial (573 aa).

The N-terminal 26 residues, 1 to 26 (MLRLPTVFRQMRPVSRVLAPHLTRAY), are a transit peptide targeting the mitochondrion. K31 is subject to N6-succinyllysine. A phosphoserine mark is found at S67 and S70. K75 contributes to the ATP binding site. At K75 the chain carries N6-acetyllysine. Residue K82 is modified to N6-acetyllysine; alternate. K82 is modified (N6-succinyllysine; alternate). K87 carries the N6-acetyllysine modification. Y90 carries the phosphotyrosine modification. K91 carries the post-translational modification N6-acetyllysine. 111 to 115 (DGTTT) provides a ligand contact to ATP. K125 bears the N6-acetyllysine; alternate mark. The residue at position 125 (K125) is an N6-succinyllysine; alternate. Residue K130 is modified to N6-acetyllysine. At K133 the chain carries N6-acetyllysine; alternate. K133 is modified (N6-succinyllysine; alternate). An N6-malonyllysine; alternate modification is found at K133. Position 156 is an N6-acetyllysine (K156). Residues K191, K202, K205, K218, and K236 each carry the N6-acetyllysine; alternate modification. N6-succinyllysine; alternate occurs at positions 191, 202, 205, 218, and 236. N6-acetyllysine is present on K249. N6-acetyllysine; alternate is present on K250. K250 bears the N6-succinyllysine; alternate mark. N6-acetyllysine occurs at positions 269 and 292. The residue at position 301 (K301) is an N6-succinyllysine. K314 is modified (N6-acetyllysine). Residue K352 is modified to N6-acetyllysine; alternate. K352 bears the N6-succinyllysine; alternate mark. N6-acetyllysine is present on residues K359 and K389. Residue K396 is modified to N6-acetyllysine; alternate. Position 396 is an N6-succinyllysine; alternate (K396). S410 is subject to Phosphoserine. G440 provides a ligand contact to ATP. Position 469 is an N6-acetyllysine (K469). Position 481 is an N6-acetyllysine; alternate (K481). K481 is modified (N6-succinyllysine; alternate). Position 488 is a phosphoserine (S488). D520 contacts ATP. K551 is covalently cross-linked (Glycyl lysine isopeptide (Lys-Gly) (interchain with G-Cter in SUMO2)).

Belongs to the chaperonin (HSP60) family. Homoheptamer arranged in a ring structure. The functional units of these chaperonins consist of heptameric rings of the large subunit Hsp60, which function as a back-to-back double ring. Interacts with 2 heptameric Hsp10 rings to form the symmetrical football complex. Interacts with HRAS. Interacts with ATAD3A. Interacts with ETFBKMT and EEF1AKMT3. Interacts with MFHAS1. In terms of assembly, (Microbial infection) Interacts with hepatitis B virus/HBV protein X. As to quaternary structure, (Microbial infection) Interacts with HTLV-1 protein p40tax.

Its subcellular location is the mitochondrion matrix. It carries out the reaction ATP + H2O + a folded polypeptide = ADP + phosphate + an unfolded polypeptide.. Chaperonin implicated in mitochondrial protein import and macromolecular assembly. Together with Hsp10, facilitates the correct folding of imported proteins. May also prevent misfolding and promote the refolding and proper assembly of unfolded polypeptides generated under stress conditions in the mitochondrial matrix. The functional units of these chaperonins consist of heptameric rings of the large subunit Hsp60, which function as a back-to-back double ring. In a cyclic reaction, Hsp60 ring complexes bind one unfolded substrate protein per ring, followed by the binding of ATP and association with 2 heptameric rings of the co-chaperonin Hsp10. This leads to sequestration of the substrate protein in the inner cavity of Hsp60 where, for a certain period of time, it can fold undisturbed by other cell components. Synchronous hydrolysis of ATP in all Hsp60 subunits results in the dissociation of the chaperonin rings and the release of ADP and the folded substrate protein. In Homo sapiens (Human), this protein is 60 kDa heat shock protein, mitochondrial (HSPD1).